A 358-amino-acid polypeptide reads, in one-letter code: Methylthioribose-1-phosphate isomerase (358 aa).

Residues 54–56 (RGA), arginine 96, and glutamine 205 each bind substrate. The active-site Proton donor is the aspartate 246. 256 to 257 (NK) lines the substrate pocket.

Belongs to the eIF-2B alpha/beta/delta subunits family. MtnA subfamily.

It carries out the reaction 5-(methylsulfanyl)-alpha-D-ribose 1-phosphate = 5-(methylsulfanyl)-D-ribulose 1-phosphate. Its pathway is amino-acid biosynthesis; L-methionine biosynthesis via salvage pathway; L-methionine from S-methyl-5-thio-alpha-D-ribose 1-phosphate: step 1/6. Functionally, catalyzes the interconversion of methylthioribose-1-phosphate (MTR-1-P) into methylthioribulose-1-phosphate (MTRu-1-P). The protein is Methylthioribose-1-phosphate isomerase of Pseudomonas syringae pv. tomato (strain ATCC BAA-871 / DC3000).